A 305-amino-acid chain; its full sequence is Peroxisome biogenesis factor 2 (305 aa).

Over 1 to 15 the chain is Peroxisomal matrix; the sequence is MASRKENAKSANRVL. A helical membrane pass occupies residues 16-42; that stretch reads RISQLDALELNKALEQLVWSQFTQCFH. Topologically, residues 43-48 are cytoplasmic; sequence GFKPGL. Residues 49 to 74 form a helical membrane-spanning segment; sequence LARFEPEVKACLWVFLWRFTIYSKNA. Residues 75 to 98 are Peroxisomal matrix-facing; that stretch reads TVGQSVLNIKYKNDFSPNLRYQPP. Lysine 84 carries the N6-acetyllysine modification. The chain crosses the membrane as a helical span at residues 99 to 125; the sequence is SKNQKIWYAVCTIGGRWLEERCYDLFR. The Cytoplasmic portion of the chain corresponds to 126–133; it reads NHHLASFG. The chain crosses the membrane as a helical span at residues 134–160; that stretch reads KVKQCVNFVIGLLKLGGLINFLIFLQR. Residues 161–187 are Peroxisomal matrix-facing; it reads GKFATLTERLLGIHSVFCKPQNICEVG. A helical transmembrane segment spans residues 188–211; sequence FEYMNRELLWHGFAEFLIFLLPLI. Residues 212-305 lie on the Cytoplasmic side of the membrane; it reads NVQKLKAKLS…GIEMSEVNAL (94 aa). The Zn(2+) site is built by cysteine 244, cysteine 247, cysteine 259, histidine 261, cysteine 264, cysteine 267, cysteine 280, and cysteine 283. The segment at 244 to 284 adopts an RING-type zinc-finger fold; the sequence is CALCGEWPTMPHTIGCEHIFCYFCAKSSFLFDVYFTCPKCG.

The protein belongs to the pex2/pex10/pex12 family. As to quaternary structure, component of the PEX2-PEX10-PEX12 retrotranslocation channel, composed of PEX2, PEX10 and PEX12. Post-translationally, forms intramolecular and intermolecular disulfide bonds in response to reactive oxygen species (ROS), promoting higher stability.

Its subcellular location is the peroxisome membrane. It catalyses the reaction [E2 ubiquitin-conjugating enzyme]-S-ubiquitinyl-L-cysteine + [acceptor protein]-L-cysteine = [E2 ubiquitin-conjugating enzyme]-L-cysteine + [acceptor protein]-S-ubiquitinyl-L-cysteine.. The enzyme catalyses S-ubiquitinyl-[E2 ubiquitin-conjugating enzyme]-L-cysteine + [acceptor protein]-L-lysine = [E2 ubiquitin-conjugating enzyme]-L-cysteine + N(6)-ubiquitinyl-[acceptor protein]-L-lysine.. It functions in the pathway protein modification; protein ubiquitination. Functionally, E3 ubiquitin-protein ligase component of a retrotranslocation channel required for peroxisome organization by mediating export of the PEX5 receptor from peroxisomes to the cytosol, thereby promoting PEX5 recycling. The retrotranslocation channel is composed of PEX2, PEX10 and PEX12; each subunit contributing transmembrane segments that coassemble into an open channel that specifically allows the passage of PEX5 through the peroxisomal membrane. PEX2 also regulates peroxisome organization by acting as a E3 ubiquitin-protein ligase. PEX2 ubiquitinates PEX5 during its passage through the retrotranslocation channel: catalyzes monoubiquitination of PEX5 at 'Cys-11', a modification that acts as a signal for PEX5 extraction into the cytosol. Required for pexophagy in response to starvation by mediating ubiquitination of peroxisomal proteins, such as PEX5 and ABCD3/PMP70. Also involved in the response to reactive oxygen species (ROS) by mediating 'Lys-48'-linked polyubiquitination and subsequent degradation of PNPLA2/ATGL, thereby regulating lipolysis. In Homo sapiens (Human), this protein is Peroxisome biogenesis factor 2.